The sequence spans 169 residues: EP300-interacting inhibitor of differentiation 1 (169 aa).

Residues 31 to 50 (GRGARGPAPEEGPMEEEAGP) form a disordered region. The interaction with NR0B2 stretch occupies residues 54–120 (RAQRGLFPEA…AGDALDGGFQ (67 aa)). The LXCXE motif motif lies at 150 to 154 (LGCDE).

Interacts via its LXCXE motif with the entire pocket region of RB1. Interacts with EP300, NR0B2 and TRIM27. As to expression, expressed in all adult tissues examined and during embryogenesis.

The protein resides in the nucleus. It is found in the cytoplasm. Functionally, interacts with RB1 and EP300 and acts as a repressor of MYOD1 transactivation. Inhibits EP300 and CBP histone acetyltransferase activity. May be involved in coupling cell cycle exit to the transcriptional activation of genes required for cellular differentiation. May act as a candidate coinhibitory factor for NR0B2 that can be directly linked to transcription inhibitory mechanisms. The protein is EP300-interacting inhibitor of differentiation 1 of Mus musculus (Mouse).